Consider the following 433-residue polypeptide: Tol-Pal system protein TolB (433 aa).

Positions 1-26 are cleaved as a signal peptide; it reads MSLMTKLGFRALVASCLIAAGGAAHA.

The protein belongs to the TolB family. The Tol-Pal system is composed of five core proteins: the inner membrane proteins TolA, TolQ and TolR, the periplasmic protein TolB and the outer membrane protein Pal. They form a network linking the inner and outer membranes and the peptidoglycan layer.

Its subcellular location is the periplasm. Functionally, part of the Tol-Pal system, which plays a role in outer membrane invagination during cell division and is important for maintaining outer membrane integrity. The chain is Tol-Pal system protein TolB from Burkholderia thailandensis (strain ATCC 700388 / DSM 13276 / CCUG 48851 / CIP 106301 / E264).